The sequence spans 202 residues: MFAIGLTGGIGSGKTTVADLFGARGASLVDTDLIAHRITAPGGLAMPAIEQAFGRGFVAADGSLDRAKMRTLIFSDDAALRRLEAITHPLIRAETDREAREAPGPYVMFVVPLLVESGNWKARSDRVLVVDCPVETQIARVMRRNGFTREQVEAIIAKQATREARLAAADDVIVNDATTPDALAAQVDALHQRYLGFAAAAR.

The region spanning 3–201 (AIGLTGGIGS…QRYLGFAAAA (199 aa)) is the DPCK domain. 11–16 (GSGKTT) lines the ATP pocket.

This sequence belongs to the CoaE family.

It is found in the cytoplasm. It carries out the reaction 3'-dephospho-CoA + ATP = ADP + CoA + H(+). It participates in cofactor biosynthesis; coenzyme A biosynthesis; CoA from (R)-pantothenate: step 5/5. Functionally, catalyzes the phosphorylation of the 3'-hydroxyl group of dephosphocoenzyme A to form coenzyme A. The protein is Dephospho-CoA kinase of Burkholderia lata (strain ATCC 17760 / DSM 23089 / LMG 22485 / NCIMB 9086 / R18194 / 383).